A 543-amino-acid polypeptide reads, in one-letter code: Tubby-related protein 1 (543 aa).

The segment at 1-290 (MPLQEETLRE…RASSPPVEVG (290 aa)) is disordered. Basic and acidic residues-rich tracts occupy residues 46–56 (PETPDSLESKP) and 86–99 (FLRDPEAKKRDPRE). 2 stretches are compositionally biased toward acidic residues: residues 110–132 (GGEENSEEDSDDDDNDDDEEEEE) and 244–255 (KKEEEEEVEEEV). Residues 267 to 276 (GRAKGKGKKK) show a composition bias toward basic residues.

It belongs to the TUB family. Homodimer. May interact with ABCF1, PSIP1, ZEB1 and HMGB2 (Potential). Interacts with F-actin. Interacts with DNM1. Interacts with TUB. Interacts with TYRO3. Retina specific. Detected in the outer plexiform layer in photoreceptor cells (at protein level).

It localises to the cytoplasm. The protein localises to the cell membrane. The protein resides in the secreted. Its subcellular location is the synapse. Functionally, required for normal development of photoreceptor synapses. Required for normal photoreceptor function and for long-term survival of photoreceptor cells. Interacts with cytoskeleton proteins and may play a role in protein transport in photoreceptor cells. Binds lipids, especially phosphatidylinositol 3-phosphate, phosphatidylinositol 4-phosphate, phosphatidylinositol 5-phosphate, phosphatidylinositol 3,4-bisphosphate, phosphatidylinositol 4,5-bisphosphate, phosphatidylinositol 3,4,5-bisphosphate, phosphatidylserine and phosphatidic acid (in vitro). Contribute to stimulation of phagocytosis of apoptotic retinal pigment epithelium (RPE) cells and macrophages. The chain is Tubby-related protein 1 (Tulp1) from Mus musculus (Mouse).